Reading from the N-terminus, the 480-residue chain is Glycogen synthase (480 aa).

Position 15 (lysine 15) interacts with ADP-alpha-D-glucose.

Belongs to the glycosyltransferase 1 family. Bacterial/plant glycogen synthase subfamily.

It carries out the reaction [(1-&gt;4)-alpha-D-glucosyl](n) + ADP-alpha-D-glucose = [(1-&gt;4)-alpha-D-glucosyl](n+1) + ADP + H(+). Its pathway is glycan biosynthesis; glycogen biosynthesis. Its function is as follows. Synthesizes alpha-1,4-glucan chains using ADP-glucose. This chain is Glycogen synthase, found in Desulforamulus reducens (strain ATCC BAA-1160 / DSM 100696 / MI-1) (Desulfotomaculum reducens).